A 40-amino-acid polypeptide reads, in one-letter code: Plasma membrane ATPase proteolipid 1 (40 aa).

The propeptide occupies 1–2; sequence MT. The helical transmembrane segment at 3 to 26 threads the bilayer; sequence LPGGVILVFILVGLACIAIIATII. Topologically, residues 27–40 are cytoplasmic; it reads YRKWQARQRGLQRF.

As to quaternary structure, monomer and homodimer. Associated with the 100 kDa subunit of the plasma membrane H(+)-ATPase.

The protein resides in the cell membrane. In Saccharomyces cerevisiae (strain ATCC 204508 / S288c) (Baker's yeast), this protein is Plasma membrane ATPase proteolipid 1 (PMP1).